Consider the following 43-residue polypeptide: METATLIAISISGLLVSFTGYALYIAFGQPSQQLRDPFEEHGD.

The chain crosses the membrane as a helical span at residues 7 to 27 (IAISISGLLVSFTGYALYIAF).

This sequence belongs to the PsbN family.

The protein localises to the plastid. The protein resides in the chloroplast thylakoid membrane. May play a role in photosystem I and II biogenesis. The sequence is that of Protein PsbN from Glycine max (Soybean).